Consider the following 385-residue polypeptide: Glucans biosynthesis protein C (385 aa).

10 consecutive transmembrane segments (helical) span residues 17 to 39 (AWLMLLGIPFHISLIYSSHTWHV), 54 to 76 (FIHSFRMQVFFVISGYFSYMLFL), 88 to 110 (VERVGIPMLTAIPLLTLPQFIML), 136 to 158 (LISHLWFLLVLVVMTTLCVWIFK), 179 to 198 (LSVIFLCLGIGYAVIRRTIF), 213 to 235 (IVMQTLFYLPFFILGALAFIFPH), 242 to 261 (TPSRGCTLAAALAFVAYLLN), 276 to 295 (SVITMVLGLWMVNVVFSFGH), 308 to 330 (FVNASLFIYLVHHPLTLFFGAYI), and 334 to 356 (ITSNWLGFLCGLIFVVGIAIILY).

The protein belongs to the acyltransferase 3 family. OpgC subfamily.

The protein localises to the cell membrane. It functions in the pathway glycan metabolism; osmoregulated periplasmic glucan (OPG) biosynthesis. Necessary for the succinyl substitution of periplasmic glucans. Could catalyze the transfer of succinyl residues from the cytoplasmic side of the membrane to the nascent glucan backbones on the periplasmic side of the membrane. The polypeptide is Glucans biosynthesis protein C (Escherichia coli O157:H7).